A 50-amino-acid polypeptide reads, in one-letter code: Protein HokE (50 aa).

Residues 5 to 25 (YALVAVIVLCLTVLGFTLLVG) traverse the membrane as a helical segment.

Belongs to the Hok/Gef family.

Its subcellular location is the cell inner membrane. Its function is as follows. Toxic component of a type I toxin-antitoxin (TA) system. When overexpressed kills cells within minutes; causes collapse of the transmembrane potential and arrest of respiration. Its toxic effect is probably neutralized by an antisense antitoxin Sok RNA. The protein is Protein HokE (hokE) of Escherichia coli O157:H7.